The following is a 102-amino-acid chain: Small ribosomal subunit protein bS6 (102 aa).

Belongs to the bacterial ribosomal protein bS6 family.

Its function is as follows. Binds together with bS18 to 16S ribosomal RNA. The polypeptide is Small ribosomal subunit protein bS6 (Deinococcus deserti (strain DSM 17065 / CIP 109153 / LMG 22923 / VCD115)).